The primary structure comprises 181 residues: MREEKQLLKQEIIDKIQRYPAFVIMQYAGLTANQANDFRRQLGKIGGDVEVVRKRVLLKAAKDAGLELDVSSLNGHIGLVFLGEDPIEATKTVFKFSQEREKIIQVLGGRFDGQIYSGDDVEKLSKLPSKDEMRAQFLSTLEAPMAQTLAVVEALLASVAYCLDNKSKQGSEEPENSASEA.

Belongs to the universal ribosomal protein uL10 family. As to quaternary structure, part of the ribosomal stalk of the 50S ribosomal subunit. The N-terminus interacts with L11 and the large rRNA to form the base of the stalk. The C-terminus forms an elongated spine to which L12 dimers bind in a sequential fashion forming a multimeric L10(L12)X complex.

Functionally, forms part of the ribosomal stalk, playing a central role in the interaction of the ribosome with GTP-bound translation factors. The chain is Large ribosomal subunit protein uL10 from Protochlamydia amoebophila (strain UWE25).